Consider the following 701-residue polypeptide: Aryl hydrocarbon receptor repressor (701 aa).

The disordered stretch occupies residues 1–38 (MMIPSGECTYAGRKRRKPIQKRRLTMGTEKSNPSKRHR). Residues 12–24 (GRKRRKPIQKRRL) are compositionally biased toward basic residues. Positions 25–78 (TMGTEKSNPSKRHRDRLNTELDHLASLLPFSPDIISKLDKLSVLRLSVSYLRVK) constitute a bHLH domain. The 71-residue stretch at 106–176 (PVQEGRLLLE…RQLHWAMDPP (71 aa)) folds into the PAS domain. Disordered stretches follow at residues 360–389 (DPKG…QREM) and 409–436 (TEQR…LVPH). The segment covering 365–375 (SGDREEDDQKH) has biased composition (basic and acidic residues). The segment covering 414–430 (QEGTTKLTRQPSKSEPS) has biased composition (polar residues). A needed for transcriptional repression region spans residues 555–701 (ASTTSCVWLG…SKGSDGIFLP (147 aa)). Glycyl lysine isopeptide (Lys-Gly) (interchain with G-Cter in SUMO2) cross-links involve residues Lys583 and Lys660.

In terms of assembly, interacts with ARNT, ANKRA2, HDAC4 and HDAC5. Interacts with ARNT; forms a heterodimer with ARNT. In terms of tissue distribution, highly expressed in testis and weakly expressed in heart and liver. Highly expressed in small intestine and cecum in a male-dominant sexual dimorphic fashion.

It localises to the cytoplasm. The protein resides in the nucleus. Its function is as follows. Mediates dioxin toxicity and is involved in regulation of cell growth and differentiation. Represses the transcription activity of AHR by competing with this transcription factor for heterodimer formation with the ARNT and subsequently binding to the xenobiotic response element (XRE) sequence present in the promoter regulatory region of variety of genes. Represses CYP1A1 by binding the XRE sequence and recruiting ANKRA2, HDAC4 and/or HDAC5. Autoregulates its expression by associating with its own XRE site. The sequence is that of Aryl hydrocarbon receptor repressor (Ahrr) from Rattus norvegicus (Rat).